The sequence spans 335 residues: MATFVSELEAAKKNLSEALGDNVKQYWANLKLWFKQKISKEEFDLEAHRLLTQDNVHSHNDFLLAILTRCQILVSTPDGAGSLPWPGGSAAKPGKPKGKKKLSSVRQKFDHRFQPQNPLSGAQQFVAKDPQDDDDLKLCSHTMMLPTRGQLEGRMIVTAYEHGLDNVTEEAVSAVVYAVENHLKDILTSVVSRRKAYRLRDGHFKYAFGSNVTPQPYLKNSVVAYNNLIESPPAFTAPCAGQNPASHPPPDDAEQQAALLLACSGDTLPASLPPVNMYDLFEALQVHREVIPTHTVYALNIERIITKLWHPNHEELQQDKVHRQRLAAKEGLLLC.

Residues leucine 83 to serine 103 form a disordered region. A compositionally biased stretch (low complexity) spans proline 84–proline 93. Over residues glycine 94–serine 103 the composition is skewed to basic residues.

The protein belongs to the TADA1 family. As to quaternary structure, component of the STAGA transcription coactivator-HAT complex, at least composed of SUPT3H, GCN5L2, TAF5L, TAF6L, SUPT7L, TADA3L, TAD1L, TAF10, TAF12, TRRAP and TAF9.

Its subcellular location is the nucleus. In terms of biological role, probably involved in transcriptional regulation. The sequence is that of Transcriptional adapter 1 (TADA1) from Homo sapiens (Human).